We begin with the raw amino-acid sequence, 169 residues long: Prolyl-tRNA synthetase associated domain-containing protein 1 (169 aa).

This sequence belongs to the PRORSD1 family.

In Mus musculus (Mouse), this protein is Prolyl-tRNA synthetase associated domain-containing protein 1 (Prorsd1).